Here is a 39-residue protein sequence, read N- to C-terminus: Non-specific lipid-transfer protein (39 aa).

It belongs to the plant LTP family.

Plant non-specific lipid-transfer proteins transfer phospholipids as well as galactolipids across membranes. May play a role in wax or cutin deposition in the cell walls of expanding epidermal cells and certain secretory tissues. The sequence is that of Non-specific lipid-transfer protein from Musa acuminata (Banana).